Consider the following 132-residue polypeptide: Histone H2B.2 (132 aa).

The span at 1–19 (MAPKAEKKPASKAPAEKKP) shows a compositional bias: basic and acidic residues. The tract at residues 1-39 (MAPKAEKKPASKAPAEKKPAAKKTSSSVDPSKKRTKARK) is disordered. An N6-acetyllysine; alternate mark is found at K7 and K8. Glycyl lysine isopeptide (Lys-Gly) (interchain with G-Cter in SUMO); alternate cross-links involve residues K7 and K8. The residue at position 11 (S11) is a Phosphoserine. An N6-acetyllysine modification is found at K12. K17 carries the post-translational modification N6-acetyllysine; alternate. K17 is covalently cross-linked (Glycyl lysine isopeptide (Lys-Gly) (interchain with G-Cter in SUMO); alternate). K18 is covalently cross-linked (Glycyl lysine isopeptide (Lys-Gly) (interchain with G-Cter in SUMO)). Residue K125 forms a Glycyl lysine isopeptide (Lys-Gly) (interchain with G-Cter in ubiquitin) linkage.

Belongs to the histone H2B family. In terms of assembly, the nucleosome is a histone octamer containing two molecules each of H2A, H2B, H3 and H4 assembled in one H3-H4 heterotetramer and two H2A-H2B heterodimers. The octamer wraps approximately 147 bp of DNA. Post-translationally, monoubiquitinated by the UBC2-BRE1 complex to form H2BK123ub1. H2BK123ub1 gives a specific tag for epigenetic transcriptional activation and is also prerequisite for H3K4me and H3K79me formation. H2BK123ub1 also modulates the formation of double-strand breaks during meiosis and is a prerequisite for DNA-damage checkpoint activation. In terms of processing, phosphorylated by STE20 to form H2BS10ph during progression through meiotic prophase. May be correlated with chromosome condensation. Acetylated by GCN5 to form H2BK11ac and H2BK16ac. H2BK16ac can also be formed by ESA1. Acetylation of N-terminal lysines and particularly formation of H2BK11acK16ac has a positive effect on transcription. Post-translationally, sumoylation to form H2BK6su or H2BK7su, and probably also H2BK16su or H2BK17su, occurs preferentially near the telomeres and represses gene transcription.

It is found in the nucleus. The protein localises to the chromosome. Its function is as follows. Core component of nucleosome. Nucleosomes wrap and compact DNA into chromatin, limiting DNA accessibility to the cellular machineries which require DNA as a template. Histones thereby play a central role in transcription regulation, DNA repair, DNA replication and chromosomal stability. DNA accessibility is regulated via a complex set of post-translational modifications of histones, also called histone code, and nucleosome remodeling. The sequence is that of Histone H2B.2 (HTB1) from Kluyveromyces lactis (strain ATCC 8585 / CBS 2359 / DSM 70799 / NBRC 1267 / NRRL Y-1140 / WM37) (Yeast).